Here is a 296-residue protein sequence, read N- to C-terminus: NAD kinase (296 aa).

Asp-72 (proton acceptor) is an active-site residue. NAD(+) is bound by residues 72–73 (DG), 146–147 (ND), Arg-157, Lys-174, Asp-176, 187–192 (TAYALS), and Gln-247.

This sequence belongs to the NAD kinase family. Requires a divalent metal cation as cofactor.

It localises to the cytoplasm. The catalysed reaction is NAD(+) + ATP = ADP + NADP(+) + H(+). In terms of biological role, involved in the regulation of the intracellular balance of NAD and NADP, and is a key enzyme in the biosynthesis of NADP. Catalyzes specifically the phosphorylation on 2'-hydroxyl of the adenosine moiety of NAD to yield NADP. The sequence is that of NAD kinase from Pseudomonas fluorescens (strain ATCC BAA-477 / NRRL B-23932 / Pf-5).